We begin with the raw amino-acid sequence, 307 residues long: Protease HtpX homolog (307 aa).

A run of 2 helical transmembrane segments spans residues 7–27 (AILLAGLTGLFMGVGYLIGGA) and 28–48 (SGATIALVVAAATNLFAYWNS). Position 130 (H130) interacts with Zn(2+). E131 is an active-site residue. H134 contributes to the Zn(2+) binding site. Helical transmembrane passes span 145 to 165 (ITATIAGAISMLAQFGMFFGG) and 171 to 191 (GPGIIGSLAMMILAPFGAMLV). E200 is a binding site for Zn(2+). The tract at residues 277–307 (AGQSGGGLAPGGPPPDPSSPWNKGSRRGPWG) is disordered.

This sequence belongs to the peptidase M48B family. Zn(2+) serves as cofactor.

It is found in the cell inner membrane. In Nitrobacter winogradskyi (strain ATCC 25391 / DSM 10237 / CIP 104748 / NCIMB 11846 / Nb-255), this protein is Protease HtpX homolog.